A 152-amino-acid chain; its full sequence is Transcriptional regulator MraZ (152 aa).

2 consecutive SpoVT-AbrB domains span residues 5–52 (ATLV…PLPE) and 81–124 (ASEC…DETT).

The protein belongs to the MraZ family. Forms oligomers.

The protein resides in the cytoplasm. It is found in the nucleoid. Negatively regulates its own expression and that of the subsequent genes in the proximal part of the division and cell wall (dcw) gene cluster. Acts by binding directly to DNA. May also regulate the expression of genes outside the dcw cluster. This chain is Transcriptional regulator MraZ, found in Shigella flexneri serotype 5b (strain 8401).